The following is a 418-amino-acid chain: Gamma-glutamyl phosphate reductase (418 aa).

Belongs to the gamma-glutamyl phosphate reductase family.

The protein resides in the cytoplasm. It carries out the reaction L-glutamate 5-semialdehyde + phosphate + NADP(+) = L-glutamyl 5-phosphate + NADPH + H(+). The protein operates within amino-acid biosynthesis; L-proline biosynthesis; L-glutamate 5-semialdehyde from L-glutamate: step 2/2. In terms of biological role, catalyzes the NADPH-dependent reduction of L-glutamate 5-phosphate into L-glutamate 5-semialdehyde and phosphate. The product spontaneously undergoes cyclization to form 1-pyrroline-5-carboxylate. This Syntrophotalea carbinolica (strain DSM 2380 / NBRC 103641 / GraBd1) (Pelobacter carbinolicus) protein is Gamma-glutamyl phosphate reductase.